The chain runs to 263 residues: Small ribosomal subunit protein eS4 (263 aa).

Residues 42 to 104 (LPLIIFLRNR…TGEHFRLVYD (63 aa)) form the S4 RNA-binding domain.

The protein belongs to the eukaryotic ribosomal protein eS4 family. Component of the small ribosomal subunit.

The protein localises to the cytoplasm. In terms of biological role, component of the small ribosomal subunit. The ribosome is a large ribonucleoprotein complex responsible for the synthesis of proteins in the cell. This is Small ribosomal subunit protein eS4 (rps4) from Xenopus laevis (African clawed frog).